The chain runs to 222 residues: Myosin regulatory light chain 2 (222 aa).

The disordered stretch occupies residues 1–65 (MADEKKKVKK…RGSRKSKRAG (65 aa)). The residue at position 2 (Ala2) is an N-acetylalanine. The span at 19–53 (TSETASEAASEAATPAPAATPAPAASATGSKRASG) shows a compositional bias: low complexity. Phosphoserine is present on residues Ser66 and Ser67. 3 EF-hand domains span residues 75–110 (KQIA…VGKI), 147–180 (DEDE…FGDK), and 181–216 (FTMK…KGEE). 4 residues coordinate Ca(2+): Asp88, Asp90, Asp92, and Asp99.

As to quaternary structure, myosin is a hexamer of 2 heavy chains and 4 light chains.

The polypeptide is Myosin regulatory light chain 2 (Mlc2) (Drosophila melanogaster (Fruit fly)).